Here is a 73-residue protein sequence, read N- to C-terminus: Protein SlyX homolog (73 aa).

The disordered stretch occupies residues 54–73 (LQQAESNAPAAPANERPPHY). Low complexity predominate over residues 57 to 67 (AESNAPAAPAN).

It belongs to the SlyX family.

This Rhodopseudomonas palustris (strain BisA53) protein is Protein SlyX homolog.